The following is a 239-amino-acid chain: tRNA (guanine-N(7)-)-methyltransferase (239 aa).

S-adenosyl-L-methionine contacts are provided by Glu69, Glu94, Asp121, and Asp144. Residue Asp144 is part of the active site. Residues Lys148, Asp180, and 217–220 (TKFE) contribute to the substrate site.

This sequence belongs to the class I-like SAM-binding methyltransferase superfamily. TrmB family.

The enzyme catalyses guanosine(46) in tRNA + S-adenosyl-L-methionine = N(7)-methylguanosine(46) in tRNA + S-adenosyl-L-homocysteine. It participates in tRNA modification; N(7)-methylguanine-tRNA biosynthesis. Its function is as follows. Catalyzes the formation of N(7)-methylguanine at position 46 (m7G46) in tRNA. The sequence is that of tRNA (guanine-N(7)-)-methyltransferase from Pseudoalteromonas atlantica (strain T6c / ATCC BAA-1087).